A 129-amino-acid chain; its full sequence is Small ribosomal subunit protein uS11 (129 aa).

This sequence belongs to the universal ribosomal protein uS11 family. In terms of assembly, part of the 30S ribosomal subunit. Interacts with proteins S7 and S18. Binds to IF-3.

In terms of biological role, located on the platform of the 30S subunit, it bridges several disparate RNA helices of the 16S rRNA. Forms part of the Shine-Dalgarno cleft in the 70S ribosome. The chain is Small ribosomal subunit protein uS11 from Bradyrhizobium diazoefficiens (strain JCM 10833 / BCRC 13528 / IAM 13628 / NBRC 14792 / USDA 110).